The primary structure comprises 1530 residues: B-cell CLL/lymphoma 9-like protein (1530 aa).

Disordered stretches follow at residues 1 to 101, 155 to 187, 246 to 353, 398 to 439, 473 to 503, 821 to 1076, 1250 to 1279, and 1310 to 1331; these read MHSE…VLEP, QGHS…TDLH, HISS…PSVL, SGTG…IGGG, QTQN…LSSP, QNGR…QNPL, KGMS…SEVI, and SETM…QVSS. The span at 8-18 shows a compositional bias: polar residues; the sequence is SNHGKQVTSGA. Low complexity predominate over residues 19–34; the sequence is QSQLPNVNQAQQQAPA. Positions 81–93 are enriched in basic and acidic residues; sequence ERSVSIDTGDQRE. The segment covering 156-165 has biased composition (low complexity); sequence GHSGSSTTGH. A compositionally biased stretch (gly residues) spans 170–180; the sequence is GGPGLGSGHGP. 2 stretches are compositionally biased toward polar residues: residues 247 to 264 and 278 to 287; these read ISSS…QSGT and GTSTPSSTGH. Composition is skewed to low complexity over residues 409-426 and 485-503; these read GPNG…NSND and SLMG…LSSP. Composition is skewed to polar residues over residues 875 to 891, 920 to 930, and 944 to 953; these read LSST…TGSR, QLKSPSLSQEP, and SPSQLPQSGP. Low complexity-rich tracts occupy residues 960 to 971, 979 to 994, and 1031 to 1060; these read AASGAGTPSSTS, GPSL…PGHL, and SSST…INPS. Residues 1258 to 1268 are compositionally biased toward pro residues; that stretch reads PHQPDSFPPMP.

It belongs to the BCL9 family.

Its subcellular location is the nucleus. Its function is as follows. Transcriptional regulator that may act as an activator. Plays a role for mesoderm patterning in early embryogenesis. This chain is B-cell CLL/lymphoma 9-like protein (bcl9l), found in Danio rerio (Zebrafish).